A 200-amino-acid polypeptide reads, in one-letter code: NADH-quinone oxidoreductase subunit C (200 aa).

This sequence belongs to the complex I 30 kDa subunit family. As to quaternary structure, NDH-1 is composed of 14 different subunits. Subunits NuoB, C, D, E, F, and G constitute the peripheral sector of the complex.

It is found in the cell inner membrane. It catalyses the reaction a quinone + NADH + 5 H(+)(in) = a quinol + NAD(+) + 4 H(+)(out). Its function is as follows. NDH-1 shuttles electrons from NADH, via FMN and iron-sulfur (Fe-S) centers, to quinones in the respiratory chain. The immediate electron acceptor for the enzyme in this species is believed to be ubiquinone. Couples the redox reaction to proton translocation (for every two electrons transferred, four hydrogen ions are translocated across the cytoplasmic membrane), and thus conserves the redox energy in a proton gradient. In Paraburkholderia phytofirmans (strain DSM 17436 / LMG 22146 / PsJN) (Burkholderia phytofirmans), this protein is NADH-quinone oxidoreductase subunit C.